An 82-amino-acid polypeptide reads, in one-letter code: Small ribosomal subunit protein bS16 (82 aa).

This sequence belongs to the bacterial ribosomal protein bS16 family.

This is Small ribosomal subunit protein bS16 from Sodalis glossinidius (strain morsitans).